The primary structure comprises 343 residues: Homeobox protein Hox-D13 (343 aa).

Disordered regions lie at residues 1–28 and 78–115; these read MSRAGSWDMDGLRADGGGAGGAPASSSS and GTSERTGSSSSSSSSAVVAARPEAPPAKECPAPTPAAA. Positions 85–115 are enriched in low complexity; that stretch reads SSSSSSSSAVVAARPEAPPAKECPAPTPAAA. Positions 276 to 335 form a DNA-binding region, homeobox; the sequence is GRKKRVPYTKLQLKELENEYAINKFINKDKRRRISAATNLSERQVTIWFQNRRVKDKKIV.

This sequence belongs to the Abd-B homeobox family.

It localises to the nucleus. Its function is as follows. Sequence-specific transcription factor that binds gene promoters and activates their transcription. Part of a developmental regulatory system that provides cells with specific positional identities on the anterior-posterior axis. The polypeptide is Homeobox protein Hox-D13 (HOXD13) (Homo sapiens (Human)).